The primary structure comprises 89 residues: Sec-independent protein translocase protein TatA (89 aa).

A helical membrane pass occupies residues methionine 1–glycine 21.

This sequence belongs to the TatA/E family. As to quaternary structure, the Tat system comprises two distinct complexes: a TatABC complex, containing multiple copies of TatA, TatB and TatC subunits, and a separate TatA complex, containing only TatA subunits. Substrates initially bind to the TatABC complex, which probably triggers association of the separate TatA complex to form the active translocon.

It localises to the cell inner membrane. Functionally, part of the twin-arginine translocation (Tat) system that transports large folded proteins containing a characteristic twin-arginine motif in their signal peptide across membranes. TatA could form the protein-conducting channel of the Tat system. This Haemophilus influenzae (strain ATCC 51907 / DSM 11121 / KW20 / Rd) protein is Sec-independent protein translocase protein TatA.